We begin with the raw amino-acid sequence, 93 residues long: Small ribosomal subunit protein uS19 (93 aa).

This sequence belongs to the universal ribosomal protein uS19 family.

Protein S19 forms a complex with S13 that binds strongly to the 16S ribosomal RNA. The chain is Small ribosomal subunit protein uS19 (rpsS) from Thermus thermophilus (strain ATCC BAA-163 / DSM 7039 / HB27).